A 529-amino-acid chain; its full sequence is Probable serine/threonine protein phosphatase 2A regulatory subunit B''epsilon (529 aa).

The tract at residues 60–110 (KSGTPTNKSKNLPSVFLSSSTPPLSPRSSSGSPRFSRQRTSPPSLHSPLRS) is disordered. A compositionally biased stretch (low complexity) spans 71–109 (LPSVFLSSSTPPLSPRSSSGSPRFSRQRTSPPSLHSPLR). An EF-hand domain is found at 381 to 416 (SSEPSLEYWFKCVDLDGNGVITSNEMQFFFEEQLHR). Positions 394, 396, 398, and 405 each coordinate Ca(2+). The disordered stretch occupies residues 507–529 (EEDVDEVSNGSADVWDEPLEPPF). The span at 520 to 529 (VWDEPLEPPF) shows a compositional bias: acidic residues.

In terms of assembly, PP2A consists of a common heterodimeric core enzyme, composed of a 36 kDa catalytic subunit (subunit C) and a 65 kDa constant regulatory subunit (PR65 or subunit A), that associates with a variety of regulatory subunits. Proteins that associate with the core dimer include three families of regulatory subunits B (the R2/B/PR55/B55, R3/B''/PR72/PR130/PR59 and R5/B'/B56 families) and cell signaling molecules.

Functionally, probable regulatory subunit of type 2A protein phosphatase. The sequence is that of Probable serine/threonine protein phosphatase 2A regulatory subunit B''epsilon (B''EPSILON) from Arabidopsis thaliana (Mouse-ear cress).